The sequence spans 523 residues: Metalloprotease TIKI2 (523 aa).

Positions 1-26 are cleaved as a signal peptide; the sequence is MGKTMWARAVFLCFSVGTLLWQEVLT. Over 27–499 the chain is Extracellular; sequence RRIPVDTGQC…HSQSNSSPKC (473 aa). N-linked (GlcNAc...) asparagine glycosylation is found at Asn-225, Asn-234, Asn-283, and Asn-341. Residues 500 to 516 form a helical membrane-spanning segment; sequence LSASPAFLYTLVTLCLI. Over 517–523 the chain is Cytoplasmic; the sequence is TTMRTRS.

The protein belongs to the TIKI family. Mn(2+) is required as a cofactor. It depends on Co(2+) as a cofactor.

Its subcellular location is the cell membrane. Its function is as follows. Metalloprotease that acts as a negative regulator of the Wnt signaling pathway by mediating the cleavage of the N-terminal residues of a subset of Wnt proteins. Following cleavage, Wnt proteins become oxidized and form large disulfide-bond oligomers, leading to their inactivation. Able to cleave wnt8. Required for head formation. The sequence is that of Metalloprotease TIKI2 (trabd2b) from Xenopus tropicalis (Western clawed frog).